Here is a 342-residue protein sequence, read N- to C-terminus: Phosphate acyltransferase (342 aa).

This sequence belongs to the PlsX family. As to quaternary structure, homodimer. Probably interacts with PlsY.

The protein resides in the cytoplasm. The enzyme catalyses a fatty acyl-[ACP] + phosphate = an acyl phosphate + holo-[ACP]. It functions in the pathway lipid metabolism; phospholipid metabolism. In terms of biological role, catalyzes the reversible formation of acyl-phosphate (acyl-PO(4)) from acyl-[acyl-carrier-protein] (acyl-ACP). This enzyme utilizes acyl-ACP as fatty acyl donor, but not acyl-CoA. The chain is Phosphate acyltransferase from Trichormus variabilis (strain ATCC 29413 / PCC 7937) (Anabaena variabilis).